Reading from the N-terminus, the 214-residue chain is Eukaryotic translation initiation factor 4E-1B (214 aa).

MRNA-binding positions include 53 to 54 (WQ), 99 to 100 (WE), 154 to 159 (RAKGDK), and 202 to 204 (TKS).

Ovary, muscle and testis.

The protein localises to the cytoplasm. The protein resides in the nucleus. Its function is as follows. Does not appear to be a mRNA-cap-binding protein. This is Eukaryotic translation initiation factor 4E-1B from Danio rerio (Zebrafish).